Reading from the N-terminus, the 441-residue chain is Ribulose bisphosphate carboxylase large chain (441 aa).

Residues asparagine 89 and threonine 139 each contribute to the substrate site. Residue lysine 141 is the Proton acceptor of the active site. Lysine 143 is a binding site for substrate. The Mg(2+) site is built by lysine 167, aspartate 169, and glutamate 170. Lysine 167 carries the post-translational modification N6-carboxylysine. Catalysis depends on histidine 260, which acts as the Proton acceptor. Residues residue 261 and serine 345 each coordinate substrate.

This sequence belongs to the RuBisCO large chain family. Type I subfamily. As to quaternary structure, heterohexadecamer of 8 large chains and 8 small chains; disulfide-linked. The disulfide link is formed within the large subunit homodimers. It depends on Mg(2+) as a cofactor. Post-translationally, the disulfide bond which can form in the large chain dimeric partners within the hexadecamer appears to be associated with oxidative stress and protein turnover.

The protein localises to the plastid. It localises to the chloroplast. The catalysed reaction is 2 (2R)-3-phosphoglycerate + 2 H(+) = D-ribulose 1,5-bisphosphate + CO2 + H2O. The enzyme catalyses D-ribulose 1,5-bisphosphate + O2 = 2-phosphoglycolate + (2R)-3-phosphoglycerate + 2 H(+). RuBisCO catalyzes two reactions: the carboxylation of D-ribulose 1,5-bisphosphate, the primary event in carbon dioxide fixation, as well as the oxidative fragmentation of the pentose substrate in the photorespiration process. Both reactions occur simultaneously and in competition at the same active site. This Asclepias exaltata (Poke milkweed) protein is Ribulose bisphosphate carboxylase large chain.